Consider the following 60-residue polypeptide: MAVQQNKKSPSKRGMHRAHNALVVPGIAVESTTGETHLRHHISPNGFYRGRQVLKTKSEA.

Positions Met1–Ala21 are disordered. A compositionally biased stretch (basic residues) spans Ser9 to His19.

It belongs to the bacterial ribosomal protein bL32 family.

The chain is Large ribosomal subunit protein bL32 from Albidiferax ferrireducens (strain ATCC BAA-621 / DSM 15236 / T118) (Rhodoferax ferrireducens).